The following is a 180-amino-acid chain: Pyruvoyl-dependent arginine decarboxylase (180 aa).

At Ser41 the chain carries Pyruvic acid (Ser).

Belongs to the PdaD family. The cofactor is pyruvate.

The catalysed reaction is L-arginine + H(+) = agmatine + CO2. This chain is Pyruvoyl-dependent arginine decarboxylase, found in Methanococcoides burtonii (strain DSM 6242 / NBRC 107633 / OCM 468 / ACE-M).